Consider the following 1034-residue polypeptide: Potassium-transporting ATPase alpha chain 1 (1034 aa).

Residues 1-97 (MGKAENYEMY…NALRPPRGTP (97 aa)) lie on the Cytoplasmic side of the membrane. A phosphotyrosine mark is found at Y7 and Y10. Residues 14-41 (LGPGPGGDMAAKMSKKKAGKGGGKKKEK) are disordered. The span at 26–39 (MSKKKAGKGGGKKK) shows a compositional bias: basic residues. S27 carries the post-translational modification Phosphoserine. Residues 98–118 (EYVKFARQLAGGLQCLMWVAA) traverse the membrane as a helical segment. At 119 to 141 (AICLIAFAIQASEGDLTTDDNLY) the chain is on the lumenal side. Residues 142-162 (LALALIAVVVVTGCFGYYQEF) traverse the membrane as a helical segment. At 163 to 298 (KSTNIIASFK…NEKTPIAIEI (136 aa)) the chain is on the cytoplasmic side. Over residues 225-239 (NSSLTGESEPQTRSP) the composition is skewed to polar residues. The tract at residues 225–245 (NSSLTGESEPQTRSPECTHES) is disordered. A helical transmembrane segment spans residues 299 to 318 (EHFVDIIAGLAILFGATFFV). At 319 to 330 (VAMCIGYTFLRA) the chain is on the lumenal side. Residues 331 to 348 (MVFFMAIVVAYVPEGLLA) traverse the membrane as a helical segment. Residues V339, A340, V342, and E344 each coordinate K(+). Residues 349 to 782 (TVTVCLSLTA…EQGRLIFDNL (434 aa)) are Cytoplasmic-facing. Catalysis depends on D386, which acts as the 4-aspartylphosphate intermediate. The Mg(2+) site is built by D386 and T388. 2 positions are modified to phosphoserine: S462 and S600. Residues D727 and D731 each contribute to the Mg(2+) site. The chain crosses the membrane as a helical span at residues 783–802 (KKSIAYTLTKNIPELTPYLI). E796 is a binding site for K(+). Over 803-812 (YITVSVPLPL) the chain is Lumenal. The chain crosses the membrane as a helical span at residues 813-833 (GCITILFIELCTDIFPSVSLA). E821 is a binding site for K(+). Residues 834–853 (YEKAESDIMHLRPRNPKRDR) are Cytoplasmic-facing. S839 bears the Phosphoserine mark. Residues 854–876 (LVNEPLAAYSYFQIGAIQSFAGF) traverse the membrane as a helical segment. Topologically, residues 877 to 928 (TDYFTAMAQEGWFPLLCVGLRPYWENHHLQDLQDSYGQEWTFGQRLYQQYTC) are lumenal. A helical transmembrane segment spans residues 929 to 948 (YTVFFISIEMCQIADVLIRK). Topologically, residues 949–962 (TRRLSAFQQGFFRN) are cytoplasmic. S953 carries the phosphoserine; by PKA modification. Residues 963-981 (RILVIAIVFQVCIGCFLCY) form a helical membrane-spanning segment. Topologically, residues 982–996 (CPGMPNIFNFMPIRY) are lumenal. The helical transmembrane segment at 997 to 1017 (QWWLVPMPFGLLIFVYDEIRK) threads the bilayer. At 1018 to 1034 (LGVRCCPGSWWDQELYY) the chain is on the cytoplasmic side.

It belongs to the cation transport ATPase (P-type) (TC 3.A.3) family. Type IIC subfamily. As to quaternary structure, the gastric H(+)/K(+) ATPase pump is composed of the catalytic alpha subunit ATP4A and the regulatory beta subunit ATP4B. Interacts (via the P-domain) with ATP4B (via N-terminus); this interaction stabilizes the lumenal-open E2 conformation state and prevents the reverse reaction of the transport cycle.

It localises to the apical cell membrane. The enzyme catalyses K(+)(out) + ATP + H2O + H(+)(in) = K(+)(in) + ADP + phosphate + 2 H(+)(out). Functionally, the catalytic subunit of the gastric H(+)/K(+) ATPase pump which transports H(+) ions in exchange for K(+) ions across the apical membrane of parietal cells. Uses ATP as an energy source to pump H(+) ions to the gastric lumen while transporting K(+) ion from the lumen into the cell. Remarkably generates a million-fold proton gradient across the gastric parietal cell membrane, acidifying the gastric juice down to pH 1. Within a transport cycle, the transfer of a H(+) ion across the membrane is coupled to ATP hydrolysis and is associated with a transient phosphorylation that shifts the pump conformation from inward-facing (E1) to outward-facing state (E2). The release of the H(+) ion in the stomach lumen is followed by binding of K(+) ion converting the pump conformation back to the E1 state. This is Potassium-transporting ATPase alpha chain 1 (ATP4A) from Canis lupus familiaris (Dog).